Reading from the N-terminus, the 895-residue chain is Probable aminodeoxychorismate synthase, chloroplastic (895 aa).

The disordered stretch occupies residues 1–45 (MAALRLPTPPPPRAPAPWLHSSHRRRVAAPRGAGGGGGGGGAVPP). The N-terminal 48 residues, 1-48 (MAALRLPTPPPPRAPAPWLHSSHRRRVAAPRGAGGGGGGGGAVPPPPV), are a transit peptide targeting the chloroplast. Residues 32 to 42 (GAGGGGGGGGA) show a composition bias toward gly residues. One can recognise a Glutamine amidotransferase type-1 domain in the interval 49-307 (RTLLIDNYDS…KKITTDFGLQ (259 aa)). Cys-135 acts as the Nucleophile in catalysis. Catalysis depends on residues His-281 and Glu-283. The interval 387–875 (IFSVLFGHHS…KAKAPTKVVE (489 aa)) is PABB component.

In the C-terminal section; belongs to the anthranilate synthase component I family.

Its subcellular location is the plastid. The protein localises to the chloroplast. It catalyses the reaction chorismate + L-glutamine = 4-amino-4-deoxychorismate + L-glutamate. It participates in cofactor biosynthesis; tetrahydrofolate biosynthesis; 4-aminobenzoate from chorismate: step 1/2. The protein operates within antibiotic biosynthesis; candicidin biosynthesis. In terms of biological role, bifunctional enzyme that catalyzes the biosynthesis of 4-amino-4-deoxychorismate (ADC) from chorismate and glutamine. In the first step, a glutamine amidotransferase generates ammonia that is channelled between the binding sites of glutamine and chorismate and used along with chorismate in the second step, catalyzed by aminodeoxychorismate synthase, to produce ADC. Required for the synthesis of 4-aminobenzoate (PABA), an important component in tetrahydrofolate biosynthesis. Does not possess ADC lyase activity. The polypeptide is Probable aminodeoxychorismate synthase, chloroplastic (ADCS) (Oryza sativa subsp. japonica (Rice)).